Reading from the N-terminus, the 181-residue chain is Protein Syd (181 aa).

The protein belongs to the Syd family.

The protein localises to the cell inner membrane. Interacts with the SecY protein in vivo. May bind preferentially to an uncomplexed state of SecY, thus functioning either as a chelating agent for excess SecY in the cell or as a regulatory factor that negatively controls the translocase function. This Escherichia coli O157:H7 protein is Protein Syd.